Reading from the N-terminus, the 95-residue chain is Co-chaperonin GroES (95 aa).

The protein belongs to the GroES chaperonin family. As to quaternary structure, heptamer of 7 subunits arranged in a ring. Interacts with the chaperonin GroEL.

The protein resides in the cytoplasm. Its function is as follows. Together with the chaperonin GroEL, plays an essential role in assisting protein folding. The GroEL-GroES system forms a nano-cage that allows encapsulation of the non-native substrate proteins and provides a physical environment optimized to promote and accelerate protein folding. GroES binds to the apical surface of the GroEL ring, thereby capping the opening of the GroEL channel. In Rickettsia akari (strain Hartford), this protein is Co-chaperonin GroES.